The sequence spans 263 residues: Probable septum site-determining protein MinC (263 aa).

The tract at residues 107 to 159 (LPPSGARERPLDIKDSAPRKPAEEPSPSAGEARPEPAKAEEKPAEPVSRPTKV) is disordered. Composition is skewed to basic and acidic residues over residues 112–129 (ARER…KPAE) and 138–150 (ARPE…EKPA).

It belongs to the MinC family. In terms of assembly, interacts with MinD and FtsZ.

Its function is as follows. Cell division inhibitor that blocks the formation of polar Z ring septums. Rapidly oscillates between the poles of the cell to destabilize FtsZ filaments that have formed before they mature into polar Z rings. Prevents FtsZ polymerization. The protein is Probable septum site-determining protein MinC of Pseudomonas aeruginosa (strain LESB58).